A 159-amino-acid chain; its full sequence is ATP synthase subunit b (159 aa).

Residues 2–22 form a helical membrane-spanning segment; it reads NISIPQIIAAILNFIILLLIV.

The protein belongs to the ATPase B chain family. F-type ATPases have 2 components, F(1) - the catalytic core - and F(0) - the membrane proton channel. F(1) has five subunits: alpha(3), beta(3), gamma(1), delta(1), epsilon(1). F(0) has three main subunits: a(1), b(2) and c(10-14). The alpha and beta chains form an alternating ring which encloses part of the gamma chain. F(1) is attached to F(0) by a central stalk formed by the gamma and epsilon chains, while a peripheral stalk is formed by the delta and b chains.

It is found in the cell membrane. Functionally, f(1)F(0) ATP synthase produces ATP from ADP in the presence of a proton or sodium gradient. F-type ATPases consist of two structural domains, F(1) containing the extramembraneous catalytic core and F(0) containing the membrane proton channel, linked together by a central stalk and a peripheral stalk. During catalysis, ATP synthesis in the catalytic domain of F(1) is coupled via a rotary mechanism of the central stalk subunits to proton translocation. Component of the F(0) channel, it forms part of the peripheral stalk, linking F(1) to F(0). This chain is ATP synthase subunit b, found in Clostridium botulinum (strain Okra / Type B1).